A 329-amino-acid chain; its full sequence is uncharacterized protein (329 aa).

Coiled-coil stretches lie at residues 57–119 (KKEE…LQEV) and 224–250 (AQRQ…LGNV).

This is an uncharacterized protein from Macaca fascicularis (Crab-eating macaque).